We begin with the raw amino-acid sequence, 94 residues long: Co-chaperonin GroES (94 aa).

The protein belongs to the GroES chaperonin family. As to quaternary structure, heptamer of 7 subunits arranged in a ring. Interacts with the chaperonin GroEL.

It localises to the cytoplasm. Together with the chaperonin GroEL, plays an essential role in assisting protein folding. The GroEL-GroES system forms a nano-cage that allows encapsulation of the non-native substrate proteins and provides a physical environment optimized to promote and accelerate protein folding. GroES binds to the apical surface of the GroEL ring, thereby capping the opening of the GroEL channel. The chain is Co-chaperonin GroES from Bacillus cereus (strain ATCC 14579 / DSM 31 / CCUG 7414 / JCM 2152 / NBRC 15305 / NCIMB 9373 / NCTC 2599 / NRRL B-3711).